The primary structure comprises 341 residues: Uroporphyrinogen decarboxylase (341 aa).

Substrate-binding positions include 26–30, aspartate 75, tyrosine 150, serine 205, and histidine 318; that span reads RQAGR.

It belongs to the uroporphyrinogen decarboxylase family. As to quaternary structure, homodimer.

The protein resides in the cytoplasm. It carries out the reaction uroporphyrinogen III + 4 H(+) = coproporphyrinogen III + 4 CO2. It participates in porphyrin-containing compound metabolism; protoporphyrin-IX biosynthesis; coproporphyrinogen-III from 5-aminolevulinate: step 4/4. In terms of biological role, catalyzes the decarboxylation of four acetate groups of uroporphyrinogen-III to yield coproporphyrinogen-III. The sequence is that of Uroporphyrinogen decarboxylase from Thermus thermophilus (strain ATCC BAA-163 / DSM 7039 / HB27).